The chain runs to 248 residues: UPF0246 protein MYPE6270 (248 aa).

Belongs to the UPF0246 family.

The sequence is that of UPF0246 protein MYPE6270 from Malacoplasma penetrans (strain HF-2) (Mycoplasma penetrans).